We begin with the raw amino-acid sequence, 396 residues long: Ribosomal RNA large subunit methyltransferase I (396 aa).

Positions 2 to 81 constitute a PUA domain; the sequence is SVRLVLAKGR…ESIDIAFFTR (80 aa).

The protein belongs to the methyltransferase superfamily. RlmI family.

It is found in the cytoplasm. The enzyme catalyses cytidine(1962) in 23S rRNA + S-adenosyl-L-methionine = 5-methylcytidine(1962) in 23S rRNA + S-adenosyl-L-homocysteine + H(+). Specifically methylates the cytosine at position 1962 (m5C1962) of 23S rRNA. This Escherichia coli O1:K1 / APEC protein is Ribosomal RNA large subunit methyltransferase I.